Reading from the N-terminus, the 161-residue chain is Protein-export protein SecB (161 aa).

Belongs to the SecB family. In terms of assembly, homotetramer, a dimer of dimers. One homotetramer interacts with 1 SecA dimer.

It is found in the cytoplasm. Its function is as follows. One of the proteins required for the normal export of preproteins out of the cell cytoplasm. It is a molecular chaperone that binds to a subset of precursor proteins, maintaining them in a translocation-competent state. It also specifically binds to its receptor SecA. This chain is Protein-export protein SecB, found in Ectopseudomonas mendocina (strain ymp) (Pseudomonas mendocina).